The following is a 514-amino-acid chain: Lysine--tRNA ligase (514 aa).

Mg(2+) contacts are provided by Glu-422 and Glu-429.

This sequence belongs to the class-II aminoacyl-tRNA synthetase family. As to quaternary structure, homodimer. Mg(2+) is required as a cofactor.

The protein resides in the cytoplasm. It catalyses the reaction tRNA(Lys) + L-lysine + ATP = L-lysyl-tRNA(Lys) + AMP + diphosphate. The chain is Lysine--tRNA ligase from Psychrobacter arcticus (strain DSM 17307 / VKM B-2377 / 273-4).